A 934-amino-acid chain; its full sequence is MRTPPRPEGLYPSPTVRYTQFMVETGHIQLLQITYPHTHSRFRMYERAHFAACLLALVLFQRAESCDPRPVLVQVPNTVPAGYFITQVTLNGCTAIPVSFTSSDPDFTVNTDGSIVTLRSLVISTKRFSVLVQDNSGLDWRVEIILSCKNEDSQKSGSVAQKRAKRRWRPLPFSVVENASPPFPKDVEMIASDSSVNYTVHYVISGQGVTEEPIGLFQLDQKTGMVRVTGPVDREKNPEFNFIARAFDQNNREVDQFLPITVMVEDVNDNAPEFTGNRFFTVEERCRAGTRVGQVNATDRDQPKTPHSLIKYILLNATDMFSIDQSTGIITAKSNTLDREAQDKVFVGVEIRDMGGAPNGLFNRGTAVISLTDVNDNPPTFKEKLYKGTIKENLANVLVTRIPVEDKDLVNTPNWKAVYEVTKGNENGNFRMETDPKTNEGLLYVVKGLDFEKTPVMNLEVTARNEAPLVGTDAKWQSVPLQLNVEDVDEGPEFNPNIMYLKVKENLPNGTVIGTYKALDPETKNSNGIKYYKLTDPGNWITVVESTGELKVANTIDRESSLVHNDTYNITIKAVDESKKTGNGVVILQIEDVNDNIPVIQRPDLNMCNRGDAVSSVLVEAVDQDKPPYSTPFIFELGAEQEGKWKLKDITDSSVVLQQVEPMPNGMYTVPITVKDLQGTGKEQIVNVRVCSCQREDSGVGICGARSASVSLGNYGILALVLSGLLLLLLCLFLIFFCTTKRDKLQITDDTGTGGILLKSNTEAPGEEVKDGTLLLIPTADVVDGSFQSAVTESKNVNTAPGRYGQQFFQSGGVYNTTTQEFGTDQYYTSGRYDNKIYGNGTLQKFSNTGTLDTWRTNGCYLDRKLAYFGEQEDGRYADDLLKNYGNEGVGSSAGSVGCCSILGEQESMEFLNTLGPKFRPLADICYTTNKTGK.

Cadherin domains are found at residues 167-274 (RWRP…APEF), 274-381 (FTGN…PPTF), 382-494 (KEKL…GPEF), and 495-600 (NPNI…IPVI). The Extracellular portion of the chain corresponds to 167 to 716 (RWRPLPFSVV…SASVSLGNYG (550 aa)). 3 N-linked (GlcNAc...) asparagine glycosylation sites follow: N197, N296, and N316. N-linked (GlcNAc...) asparagine glycosylation is found at N509, N565, and N569. The helical transmembrane segment at 717 to 737 (ILALVLSGLLLLLLCLFLIFF) threads the bilayer. Topologically, residues 738 to 934 (CTTKRDKLQI…ICYTTNKTGK (197 aa)) are cytoplasmic.

Expressed at low levels in the brain and heart.

It localises to the cell junction. The protein resides in the desmosome. Its subcellular location is the cell membrane. A component of desmosome cell-cell junctions which are required for positive regulation of cellular adhesion. Involved in the interaction of plaque proteins and intermediate filaments mediating cell-cell adhesion. Involved in the formation and structural organization of desmosome cell-cell junctions during embryonic development. Required for embryogenesis, specifically for progression of epiboly and normal convergence-extension movements during gastrulation. Required for the development of desmosomal-rich midlines in the heart. Plays an important role in ventricular contraction and resulting heart stroke volume. This Danio rerio (Zebrafish) protein is Desmocollin 2-like protein.